We begin with the raw amino-acid sequence, 295 residues long: Acetylglutamate kinase (295 aa).

Residues Gly66–Gly67, Arg88, and Asn193 each bind substrate.

This sequence belongs to the acetylglutamate kinase family. ArgB subfamily.

The protein localises to the cytoplasm. The enzyme catalyses N-acetyl-L-glutamate + ATP = N-acetyl-L-glutamyl 5-phosphate + ADP. The protein operates within amino-acid biosynthesis; L-arginine biosynthesis; N(2)-acetyl-L-ornithine from L-glutamate: step 2/4. Its function is as follows. Catalyzes the ATP-dependent phosphorylation of N-acetyl-L-glutamate. The chain is Acetylglutamate kinase from Rhizobium etli (strain CIAT 652).